Here is a 186-residue protein sequence, read N- to C-terminus: MMELQGKFLIAMPHLDDYFNRTVVFMCEHNEQGSMGLVINQPTDLSIAELYSKLNFMMKNDRTFGNEMVVAGGPVHTERGFILHKNTLNAFQHTYKVTEELSMTTSADVVETLGSTFAPEKYLVALGCSSWGAGQLEKEISDNAWLVVSSKDQILFDMPYEDRYVAANQLLGIHPYNFALAQVGHS.

Belongs to the UPF0301 (AlgH) family.

This chain is UPF0301 protein CGSHiEE_01530, found in Haemophilus influenzae (strain PittEE).